Here is a 75-residue protein sequence, read N- to C-terminus: Small integral membrane protein 7 (75 aa).

The N-terminal stretch at Met-1–Ala-17 is a signal peptide. Topologically, residues Val-18–Tyr-53 are extracellular. The helical transmembrane segment at Phe-54–Gly-74 threads the bilayer. Position 75 (Ser-75) is a topological domain, cytoplasmic.

This sequence belongs to the SMIM7 family.

It localises to the membrane. The protein is Small integral membrane protein 7 (Smim7) of Mus musculus (Mouse).